Consider the following 301-residue polypeptide: MGAQLSTLGHVVLSPVWFLYSLLMKLFRCSTPAITLESPDIKYSLRLIDREIISHDTRRFRFALPSPQHILGLPVGQHIYLSARIDGNLVIRPYTPVSSDDDKGFVDLVIKVYFKDTHPKFPAGGKMSQYLESMQIGDTIEFRGPNGLLVYQGKGKFAIRPDKKSNPVIKTVKSVGMIAGGTGITPMLQVIRAIMKDPDDHTVCHLLFANQTEKDILLRPELEELRNEHSARFKLWYTLDRAPEAWDYSQGFVNEEMIRDHLPPPEEEPLVLMCGPPPMIQYACLPNLDRVGHPKERCFAF.

Gly-2 carries the N-myristoyl glycine lipid modification. The 113-residue stretch at 40-152 folds into the FAD-binding FR-type domain; that stretch reads DIKYSLRLID…RGPNGLLVYQ (113 aa). Position 42 is an N6-acetyllysine (Lys-42). Tyr-43 carries the post-translational modification Phosphotyrosine. FAD contacts are provided by Arg-92, Pro-93, Tyr-94, Val-109, Lys-111, and Phe-114. An N6-acetyllysine modification is found at Lys-120. Positions 126, 127, 128, and 185 each coordinate FAD.

It belongs to the flavoprotein pyridine nucleotide cytochrome reductase family. In terms of assembly, component of a complex composed of cytochrome b5, NADH-cytochrome b5 reductase (CYB5R3) and MTARC2. Interacts with MTLN; the interaction is required to maintain cellular lipid composition and leads to stimulation of mitochondrial respiratory complex I activity. It depends on FAD as a cofactor.

It localises to the endoplasmic reticulum membrane. The protein resides in the mitochondrion outer membrane. It carries out the reaction 2 Fe(III)-[cytochrome b5] + NADH = 2 Fe(II)-[cytochrome b5] + NAD(+) + H(+). Catalyzes the reduction of two molecules of cytochrome b5 using NADH as the electron donor. The polypeptide is NADH-cytochrome b5 reductase 3 (CYB5R3) (Macaca fascicularis (Crab-eating macaque)).